A 161-amino-acid chain; its full sequence is Regulator of ribonuclease activity A (161 aa).

Belongs to the RraA family. As to quaternary structure, homotrimer. Binds to both RNA-binding sites in the C-terminal region of Rne and to RhlB.

The protein localises to the cytoplasm. Its function is as follows. Globally modulates RNA abundance by binding to RNase E (Rne) and regulating its endonucleolytic activity. Can modulate Rne action in a substrate-dependent manner by altering the composition of the degradosome. Modulates RNA-binding and helicase activities of the degradosome. In Pseudoalteromonas atlantica (strain T6c / ATCC BAA-1087), this protein is Regulator of ribonuclease activity A.